The following is a 185-amino-acid chain: uncharacterized protein (185 aa).

A signal peptide spans 1–18 (MLLKLILILCFLVTLSLS). The tract at residues 30-185 (TQGPTIASGG…VQDCGEITGW (156 aa)) is disordered. Residues 86–101 (RAQEGGKKDTTKEQPK) are compositionally biased toward basic and acidic residues. Residues 103–116 (NNNNKNLGRHSSSG) are compositionally biased toward low complexity. Gly residues predominate over residues 117–135 (SGSGSGSGCGVTGDTGTGS).

The protein localises to the secreted. This is an uncharacterized protein from Dictyostelium discoideum (Social amoeba).